We begin with the raw amino-acid sequence, 193 residues long: Inner membrane protein p54 (193 aa).

The helical transmembrane segment at 32-52 (YTILIAIVVLVIIIIVLIYLF) threads the bilayer. Residues 84–126 (PQPGTSKPAGATTASVGKPVTGRPATNRPVTDRPATNNPVTDR) form a disordered region. 4 repeat units span residues 135–138 (AAAS), 139–142 (AAAS), 143–146 (AAAS), and 147–150 (AAAS). Residues 135 to 150 (AAASAAASAAASAAAS) are 4 X 4 AA tandem repeats of A-A-A-S. The interaction with host DYNLL1 stretch occupies residues 159 to 171 (YTTVTTQNTASQT).

Belongs to the asfivirus envelope protein p54 family. In terms of assembly, interacts with the host light chain cytoplasmic dynein DYNLL1; this interaction is critical for intracellular microtubule-dependent virus transport toward viral factories.

The protein localises to the virion membrane. It localises to the host cytoplasm. It is found in the host cytoskeleton. The protein resides in the host endoplasmic reticulum membrane. In terms of biological role, inner envelope protein involved, through its interaction with host dynein, in the intracellular microtubule-dependent transport of viral capsid toward viral factories. Seems to induce caspase-3 activation and apoptosis. Plays a role in virion morphogenesis by recruiting and transforming the host ER membranes into the precursors of the viral envelope. Involved in virus attachment to the host cell. This Ornithodoros (relapsing fever ticks) protein is Inner membrane protein p54.